Here is a 1849-residue protein sequence, read N- to C-terminus: Mitogen-activated protein kinase kinase kinase mkh1 (1849 aa).

A Protein kinase domain is found at 1556-1825 (WFKGQLIGKG…TKLLAEHPFC (270 aa)). ATP is bound by residues 1562 to 1570 (IGKGTYGRV) and lysine 1585. Aspartate 1686 functions as the Proton acceptor in the catalytic mechanism.

It belongs to the protein kinase superfamily. STE Ser/Thr protein kinase family. MAP kinase kinase kinase subfamily.

The catalysed reaction is L-seryl-[protein] + ATP = O-phospho-L-seryl-[protein] + ADP + H(+). It catalyses the reaction L-threonyl-[protein] + ATP = O-phospho-L-threonyl-[protein] + ADP + H(+). Its function is as follows. Mitogen-activated protein kinase kinase kinase, part of the mkh1-mkk1-spm1 MAPK cascade that regulates vegetative growth, conidial formation, colony surface hydrophobicity, osmotic stress, cell wall integrity maintenance, carbon and nitrogen source utilization, chitin distribution, septa formation, and pathogenicity. The sequence is that of Mitogen-activated protein kinase kinase kinase mkh1 from Cytospora mali (Apple Valsa canker fungus).